The chain runs to 292 residues: Aquaporin-3 (292 aa).

At 1-24 (MGRQKELVNRCGEMLHIRYRLLRQ) the chain is on the cytoplasmic side. The chain crosses the membrane as a helical span at residues 25–42 (ALAECLGTLILVMFGCGS). The Extracellular segment spans residues 43–56 (VAQVVLSRGTHGGF). The chain crosses the membrane as a helical span at residues 57–74 (LTINLAFGFAVTLGILIA). At 75–78 (GQVS) the chain is on the cytoplasmic side. Positions 79–92 (GAHLNPAVTFAMCF) form an intramembrane region, discontinuously helical. Positions 83 to 85 (NPA) match the NPA 1 motif. Over 93 to 100 (LAREPWIK) the chain is Cytoplasmic. A helical membrane pass occupies residues 101-121 (LPVYTLAQTLGAFLGAGIIFG). The Extracellular segment spans residues 122–159 (LYYDAIWAFANNQLIVSGPNGTAGIFATYPSGHLDMVN). N-linked (GlcNAc...) asparagine glycosylation is present at asparagine 141. Residues 160-177 (GFFDQFIGTASLIVCVLA) traverse the membrane as a helical segment. Residues 178–189 (IVDPYNNPVPRG) are Cytoplasmic-facing. A helical membrane pass occupies residues 190-206 (LEAFTVGLVVLVIGTSM). Residues 207–210 (GFNS) lie on the Extracellular side of the membrane. Positions 211–224 (GYAVNPARDFGPRL) form an intramembrane region, discontinuously helical. An NPA 2 motif is present at residues 215-217 (NPA). Residues 225-242 (FTAIAGWGSEVFTTGRHW) lie on the Extracellular side of the membrane. A helical membrane pass occupies residues 243-264 (WWVPIVSPLLGSIAGVFVYQLM). Over 265-292 (IGCHLEPPPPSTDEENVKLSHVKHKEQM) the chain is Cytoplasmic.

This sequence belongs to the MIP/aquaporin (TC 1.A.8) family. In terms of assembly, homotetramer; each monomer provides an independent glycerol/water pore. Could also exist in other oligomeric states.

It is found in the cell membrane. It localises to the basolateral cell membrane. It carries out the reaction glycerol(in) = glycerol(out). The catalysed reaction is H2O(in) = H2O(out). It catalyses the reaction urea(in) = urea(out). The enzyme catalyses H2O2(out) = H2O2(in). Aquaglyceroporins form homotetrameric transmembrane channels, with each monomer independently mediating glycerol and water transport across the plasma membrane along their osmotic gradient. Could also be permeable to urea. Also participates in cell permeability to H2O2 and H2O2-mediated signaling. In skin, transports glycerol to the epidermis and stratum corneum, where it maintains hydration, elasticity, and supports lipid biosynthesis for barrier repair. In kidney, contributes to the reabsorption of water, helping the body maintain proper fluid balance. In Bos taurus (Bovine), this protein is Aquaporin-3.